Here is a 212-residue protein sequence, read N- to C-terminus: Golgi SNAP receptor complex member 2 (212 aa).

An N-acetylmethionine modification is found at methionine 1. Residues 1–190 lie on the Cytoplasmic side of the membrane; that stretch reads MDPLFQQTHK…LIEKRAFQDK (190 aa). Residues 61-107 adopt a coiled-coil conformation; the sequence is NKRQNARLRVDQLKYDVQHLQTALRNFQHRRHAREQQERQREELLSR. The IxM motif; signal for cargo packaging into COPII-coated vesicles motif lies at 118–120; the sequence is IPM. A helical; Anchor for type IV membrane protein transmembrane segment spans residues 191 to 211; that stretch reads YFMIGGMLLTCVVMFLVVQYL. Position 212 (threonine 212) is a topological domain, vesicular.

The protein belongs to the GOSR2 family. As to quaternary structure, part of a unique SNARE complex composed of the Golgi SNAREs GOSR1, STX5 and YKT6. Interacts (via IxM motif) with SEC24C and SEC24D; mediates GOSR2 packaging into COPII-coated vesicles. Interacts with BET1.

The protein localises to the golgi apparatus. It localises to the cis-Golgi network membrane. The protein resides in the golgi apparatus membrane. Its subcellular location is the endoplasmic reticulum membrane. In terms of biological role, involved in transport of proteins from the cis/medial-Golgi to the trans-Golgi network. The chain is Golgi SNAP receptor complex member 2 (GOSR2) from Homo sapiens (Human).